The primary structure comprises 132 residues: Small ribosomal subunit protein uS8 (132 aa).

This sequence belongs to the universal ribosomal protein uS8 family. Part of the 30S ribosomal subunit. Contacts proteins S5 and S12.

One of the primary rRNA binding proteins, it binds directly to 16S rRNA central domain where it helps coordinate assembly of the platform of the 30S subunit. The sequence is that of Small ribosomal subunit protein uS8 from Streptococcus uberis (strain ATCC BAA-854 / 0140J).